A 443-amino-acid chain; its full sequence is Thymidine phosphorylase (443 aa).

It belongs to the thymidine/pyrimidine-nucleoside phosphorylase family. In terms of assembly, homodimer.

It catalyses the reaction thymidine + phosphate = 2-deoxy-alpha-D-ribose 1-phosphate + thymine. The protein operates within pyrimidine metabolism; dTMP biosynthesis via salvage pathway; dTMP from thymine: step 1/2. In terms of biological role, the enzymes which catalyze the reversible phosphorolysis of pyrimidine nucleosides are involved in the degradation of these compounds and in their utilization as carbon and energy sources, or in the rescue of pyrimidine bases for nucleotide synthesis. The sequence is that of Thymidine phosphorylase from Shewanella baltica (strain OS185).